A 412-amino-acid chain; its full sequence is Subtilisin-like protease 6 (412 aa).

The N-terminal stretch at 1-20 (MGFITKAIPIVLAALSTVNG) is a signal peptide. The propeptide occupies 21 to 126 (ARILEAGPHA…VVRTTTNGTN (106 aa)). In terms of domain architecture, Inhibitor I9 spans 36 to 120 (KYIVVMKREV…FIEPDFVVRT (85 aa)). Residues N123 and N126 are each glycosylated (N-linked (GlcNAc...) asparagine). The 278-residue stretch at 135-412 (SWGLARVGSK…GKLIYNGSGK (278 aa)) folds into the Peptidase S8 domain. Residues D167 and H198 each act as charge relay system in the active site. 2 N-linked (GlcNAc...) asparagine glycosylation sites follow: N252 and N264. Residue S358 is the Charge relay system of the active site. N-linked (GlcNAc...) asparagine glycosylation occurs at N408.

The protein belongs to the peptidase S8 family.

It is found in the secreted. Its function is as follows. Secreted subtilisin-like serine protease with keratinolytic activity that contributes to pathogenicity. This chain is Subtilisin-like protease 6 (SUB6), found in Trichophyton rubrum (Athlete's foot fungus).